The primary structure comprises 374 residues: 5-hydroxytryptamine receptor 1D (374 aa).

N-linked (GlcNAc...) asparagine glycans are attached at residues Asn5, Asn17, and Asn21. 3 helical membrane passes run 36 to 61 (ISLVVVLSIITLATVLSNAFVLTTIL), 73 to 94 (LIGSLATTDLLVSILVMPISIA), and 107 to 131 (LCDIWVSSDITCCTASILHLCVIAL). Residues Cys108 and Cys185 are joined by a disulfide bond. Residues Asp115 and Cys119 each contribute to the serotonin site. A DRY motif; important for ligand-induced conformation changes motif is present at residues 132-134 (DRY). The next 4 helical transmembrane spans lie at 152–173 (AAAMIAAVWAISICISIPPLFW), 192–215 (ISYTIYSTCGAFYIPSILLIILYG), 298–323 (KTLGIILGAFIICWLPFFVVSLVLPI), and 333–356 (ALFDFFTWLGYLNSLINPVIYTVF). Residue Ser318 coordinates serotonin. An NPxxY motif; important for ligand-induced conformation changes and signaling motif is present at residues 349–353 (NPVIY).

Belongs to the G-protein coupled receptor 1 family. As to quaternary structure, homodimer. Heterodimer with HTR1B. As to expression, detected in dorsal raphe.

It is found in the cell membrane. G-protein coupled receptor for 5-hydroxytryptamine (serotonin). Also functions as a receptor for ergot alkaloid derivatives, various anxiolytic and antidepressant drugs and other psychoactive substances. Ligand binding causes a conformation change that triggers signaling via guanine nucleotide-binding proteins (G proteins) and modulates the activity of downstream effectors, such as adenylate cyclase. HTR1D is coupled to G(i)/G(o) G alpha proteins and mediates inhibitory neurotransmission by inhibiting adenylate cyclase activity. Regulates the release of 5-hydroxytryptamine in the brain, and thereby affects neural activity. May also play a role in regulating the release of other neurotransmitters. May play a role in vasoconstriction. In Rattus norvegicus (Rat), this protein is 5-hydroxytryptamine receptor 1D (Htr1d).